The following is a 182-amino-acid chain: Adenine phosphoribosyltransferase (182 aa).

Belongs to the purine/pyrimidine phosphoribosyltransferase family. In terms of assembly, homodimer.

Its subcellular location is the cytoplasm. It carries out the reaction AMP + diphosphate = 5-phospho-alpha-D-ribose 1-diphosphate + adenine. Its pathway is purine metabolism; AMP biosynthesis via salvage pathway; AMP from adenine: step 1/1. Functionally, catalyzes a salvage reaction resulting in the formation of AMP, that is energically less costly than de novo synthesis. The protein is Adenine phosphoribosyltransferase of Campylobacter hominis (strain ATCC BAA-381 / DSM 21671 / CCUG 45161 / LMG 19568 / NCTC 13146 / CH001A).